The sequence spans 427 residues: 3-phosphoshikimate 1-carboxyvinyltransferase (427 aa).

3-phosphoshikimate-binding residues include K23, S24, and R28. Residue K23 participates in phosphoenolpyruvate binding. Phosphoenolpyruvate contacts are provided by G97 and R125. Positions 169, 170, 171, 197, 313, 336, and 340 each coordinate 3-phosphoshikimate. Q171 contributes to the phosphoenolpyruvate binding site. D313 (proton acceptor) is an active-site residue. Phosphoenolpyruvate-binding residues include R344, R386, and K411.

The protein belongs to the EPSP synthase family. As to quaternary structure, monomer.

It localises to the cytoplasm. The enzyme catalyses 3-phosphoshikimate + phosphoenolpyruvate = 5-O-(1-carboxyvinyl)-3-phosphoshikimate + phosphate. The protein operates within metabolic intermediate biosynthesis; chorismate biosynthesis; chorismate from D-erythrose 4-phosphate and phosphoenolpyruvate: step 6/7. Catalyzes the transfer of the enolpyruvyl moiety of phosphoenolpyruvate (PEP) to the 5-hydroxyl of shikimate-3-phosphate (S3P) to produce enolpyruvyl shikimate-3-phosphate and inorganic phosphate. The protein is 3-phosphoshikimate 1-carboxyvinyltransferase of Yersinia ruckeri.